Here is a 223-residue protein sequence, read N- to C-terminus: 23 kDa piroplasm membrane protein (223 aa).

The first 19 residues, 1-19, serve as a signal peptide directing secretion; sequence MHKFTKVFFVAILVHTLKS. At 20–197 the chain is on the extracellular side; the sequence is GLVFTPVSGT…EEEKSDKKKY (178 aa). A glycan (N-linked (GlcNAc...) asparagine) is linked at Asn69. Residues 198-218 form a helical membrane-spanning segment; it reads VLMVVVVVVFVVVASLVVFLV. At 219–223 the chain is on the cytoplasmic side; that stretch reads KFCLK.

It localises to the membrane. The protein is 23 kDa piroplasm membrane protein of Theileria buffeli.